Here is a 219-residue protein sequence, read N- to C-terminus: Casparian strip membrane protein 3 (219 aa).

A disordered region spans residues 1 to 43 (MDPGREDEVPLAATSPESRRTRSNGRGKATVGDAPPPAETVVS). At 1 to 57 (MDPGREDEVPLAATSPESRRTRSNGRGKATVGDAPPPAETVVSTKAAPLPTGGWKKG) the chain is on the cytoplasmic side. The helical transmembrane segment at 58–78 (IAILDFILRLGAIGAAMGASI) threads the bilayer. Over 79 to 108 (LMGTNEQILPFFTQFLQFHAQWDDFPVFKL) the chain is Extracellular. The helical transmembrane segment at 109 to 129 (FVVLNALAGGFLILSLPLSIV) threads the bilayer. At 130 to 147 (CIVRPLAVGPRFLLLITD) the chain is on the cytoplasmic side. A helical membrane pass occupies residues 148-168 (LVNMATVIAAASAAAAIVYVA). At 169–193 (HNGSQDANWIAICQQFTDFCQGTSE) the chain is on the extracellular side. Residue Asn170 is glycosylated (N-linked (GlcNAc...) asparagine). The chain crosses the membrane as a helical span at residues 194–214 (AVVVSFVAAVFLVCLIVVSTL). The Cytoplasmic portion of the chain corresponds to 215–219 (ALKRT).

Belongs to the Casparian strip membrane proteins (CASP) family. Homodimer and heterodimers.

It localises to the cell membrane. In terms of biological role, regulates membrane-cell wall junctions and localized cell wall deposition. Required for establishment of the Casparian strip membrane domain (CSD) and the subsequent formation of Casparian strips, a cell wall modification of the root endodermis that determines an apoplastic barrier between the intraorganismal apoplasm and the extraorganismal apoplasm and prevents lateral diffusion. The polypeptide is Casparian strip membrane protein 3 (Lotus japonicus (Lotus corniculatus var. japonicus)).